A 278-amino-acid polypeptide reads, in one-letter code: 4-deoxy-L-threo-5-hexosulose-uronate ketol-isomerase (278 aa).

The Zn(2+) site is built by H196, H198, E203, and H245.

This sequence belongs to the KduI family. Zn(2+) is required as a cofactor.

The catalysed reaction is 5-dehydro-4-deoxy-D-glucuronate = 3-deoxy-D-glycero-2,5-hexodiulosonate. Its pathway is glycan metabolism; pectin degradation; 2-dehydro-3-deoxy-D-gluconate from pectin: step 4/5. Its function is as follows. Catalyzes the isomerization of 5-dehydro-4-deoxy-D-glucuronate to 3-deoxy-D-glycero-2,5-hexodiulosonate. The polypeptide is 4-deoxy-L-threo-5-hexosulose-uronate ketol-isomerase (Salmonella choleraesuis (strain SC-B67)).